The following is a 119-amino-acid chain: Large ribosomal subunit protein bL20 (119 aa).

Belongs to the bacterial ribosomal protein bL20 family.

In terms of biological role, binds directly to 23S ribosomal RNA and is necessary for the in vitro assembly process of the 50S ribosomal subunit. It is not involved in the protein synthesizing functions of that subunit. The polypeptide is Large ribosomal subunit protein bL20 (Dehalococcoides mccartyi (strain ATCC BAA-2266 / KCTC 15142 / 195) (Dehalococcoides ethenogenes (strain 195))).